A 174-amino-acid chain; its full sequence is Transcription antitermination protein NusB (174 aa).

The segment covering 1-11 has biased composition (polar residues); it reads MSEVETTNDQT. The interval 1 to 29 is disordered; the sequence is MSEVETTNDQTPAPKRKDKKPSRSQLRSA.

Belongs to the NusB family.

Its function is as follows. Involved in transcription antitermination. Required for transcription of ribosomal RNA (rRNA) genes. Binds specifically to the boxA antiterminator sequence of the ribosomal RNA (rrn) operons. The protein is Transcription antitermination protein NusB of Marinomonas sp. (strain MWYL1).